The primary structure comprises 459 residues: tRNA-2-methylthio-N(6)-dimethylallyladenosine synthase (459 aa).

The MTTase N-terminal domain occupies 1–116 (MRAHLITYGC…IGKALETNER (116 aa)). [4Fe-4S] cluster-binding residues include Cys-10, Cys-46, Cys-79, Cys-148, Cys-152, and Cys-155. One can recognise a Radical SAM core domain in the interval 134 to 367 (PQGKLQAHLT…IAKQKEWSAR (234 aa)). One can recognise a TRAM domain in the interval 370-433 (AAKVGTIQEV…PHMLYGRLIG (64 aa)).

This sequence belongs to the methylthiotransferase family. MiaB subfamily. In terms of assembly, monomer. [4Fe-4S] cluster serves as cofactor.

It is found in the cytoplasm. The catalysed reaction is N(6)-dimethylallyladenosine(37) in tRNA + (sulfur carrier)-SH + AH2 + 2 S-adenosyl-L-methionine = 2-methylsulfanyl-N(6)-dimethylallyladenosine(37) in tRNA + (sulfur carrier)-H + 5'-deoxyadenosine + L-methionine + A + S-adenosyl-L-homocysteine + 2 H(+). Catalyzes the methylthiolation of N6-(dimethylallyl)adenosine (i(6)A), leading to the formation of 2-methylthio-N6-(dimethylallyl)adenosine (ms(2)i(6)A) at position 37 in tRNAs that read codons beginning with uridine. The polypeptide is tRNA-2-methylthio-N(6)-dimethylallyladenosine synthase (Deinococcus geothermalis (strain DSM 11300 / CIP 105573 / AG-3a)).